The following is a 240-amino-acid chain: Insulin-like growth factor-binding protein 3 receptor (240 aa).

Positions 1 to 38 (MGSCQAGHNLHLCLAHHPPLVCATLILLLLGLSGLGLG) are cleaved as a signal peptide. Topologically, residues 39 to 204 (GFLLTHTTGL…SEELALCGSR (166 aa)) are extracellular. Asn-167 is a glycosylation site (N-linked (GlcNAc...) asparagine). The helical transmembrane segment at 205-225 (VLGLGFFLVLLCGLLCCTTAV) threads the bilayer. At 226–240 (CFHPRPEFHWSRTRL) the chain is on the cytoplasmic side.

Interacts with IGFBP3. Interacts with CASP8.

It localises to the cell membrane. Functionally, cell death receptor specific for IGFBP3, may mediate caspase-8-dependent apoptosis upon ligand binding. The polypeptide is Insulin-like growth factor-binding protein 3 receptor (Tmem219) (Mus musculus (Mouse)).